The chain runs to 1036 residues: Hexagonally packed intermediate-layer surface protein (1036 aa).

A signal peptide spans 1–17; that stretch reads MKKNIALMALTGVLTLA. Intrachain disulfides connect C74-C86, C256-C275, and C642-C754.

Post-translationally, glycosylated; contains six glycans. Acylated in the N-terminal region. In terms of processing, the N-terminus is blocked.

It localises to the secreted. The protein localises to the cell wall. The protein resides in the S-layer. In terms of biological role, shape maintenance, possible protection from noxious enzymes or exogenous and unsettling DNA, and may mediate homotypic cell-cell contacts. This chain is Hexagonally packed intermediate-layer surface protein (hpi), found in Deinococcus radiodurans.